A 61-amino-acid chain; its full sequence is Large ribosomal subunit protein uL30 (61 aa).

The protein belongs to the universal ribosomal protein uL30 family. As to quaternary structure, part of the 50S ribosomal subunit.

The sequence is that of Large ribosomal subunit protein uL30 from Saccharophagus degradans (strain 2-40 / ATCC 43961 / DSM 17024).